The primary structure comprises 97 residues: uncharacterized protein (97 aa).

The signal sequence occupies residues M1 to G21. Residue C22 is the site of N-palmitoyl cysteine attachment. Residue C22 is the site of S-diacylglycerol cysteine attachment.

The protein to B.burgdorferi BBD15.

Its subcellular location is the cell membrane. This is an uncharacterized protein from Borreliella burgdorferi (strain ATCC 35210 / DSM 4680 / CIP 102532 / B31) (Borrelia burgdorferi).